The following is a 588-amino-acid chain: Proline--tRNA ligase (588 aa).

It belongs to the class-II aminoacyl-tRNA synthetase family. ProS type 1 subfamily. As to quaternary structure, homodimer.

It localises to the cytoplasm. The enzyme catalyses tRNA(Pro) + L-proline + ATP = L-prolyl-tRNA(Pro) + AMP + diphosphate. Its function is as follows. Catalyzes the attachment of proline to tRNA(Pro) in a two-step reaction: proline is first activated by ATP to form Pro-AMP and then transferred to the acceptor end of tRNA(Pro). As ProRS can inadvertently accommodate and process non-cognate amino acids such as alanine and cysteine, to avoid such errors it has two additional distinct editing activities against alanine. One activity is designated as 'pretransfer' editing and involves the tRNA(Pro)-independent hydrolysis of activated Ala-AMP. The other activity is designated 'posttransfer' editing and involves deacylation of mischarged Ala-tRNA(Pro). The misacylated Cys-tRNA(Pro) is not edited by ProRS. The polypeptide is Proline--tRNA ligase (Helicobacter hepaticus (strain ATCC 51449 / 3B1)).